The sequence spans 318 residues: Thymidylate synthase (318 aa).

Residues arginine 26 and 181 to 182 each bind dUMP; that span reads RR. The active-site Nucleophile is the cysteine 201. DUMP is bound by residues 221–224, asparagine 232, and 262–264; these read RSAD and HIY. Position 224 (aspartate 224) interacts with (6R)-5,10-methylene-5,6,7,8-tetrahydrofolate. (6R)-5,10-methylene-5,6,7,8-tetrahydrofolate is bound at residue alanine 317.

The protein belongs to the thymidylate synthase family. Bacterial-type ThyA subfamily. Homodimer.

The protein resides in the cytoplasm. It catalyses the reaction dUMP + (6R)-5,10-methylene-5,6,7,8-tetrahydrofolate = 7,8-dihydrofolate + dTMP. It participates in pyrimidine metabolism; dTTP biosynthesis. Its function is as follows. Catalyzes the reductive methylation of 2'-deoxyuridine-5'-monophosphate (dUMP) to 2'-deoxythymidine-5'-monophosphate (dTMP) while utilizing 5,10-methylenetetrahydrofolate (mTHF) as the methyl donor and reductant in the reaction, yielding dihydrofolate (DHF) as a by-product. This enzymatic reaction provides an intracellular de novo source of dTMP, an essential precursor for DNA biosynthesis. The protein is Thymidylate synthase of Staphylococcus haemolyticus (strain JCSC1435).